Consider the following 593-residue polypeptide: High affinity cGMP-specific 3',5'-cyclic phosphodiesterase 9A (593 aa).

The disordered stretch occupies residues 87–142; that stretch reads SAGVEDKRTTSRGQSAERPLRDRRVVGLEQPRREGAFESGQVEPRPREPQGCCQEG. The span at 104 to 122 shows a compositional bias: basic and acidic residues; it reads RPLRDRRVVGLEQPRREGA. The region spanning 236–557 is the PDEase domain; the sequence is PRRDVPTYPK…DRYEELKRID (322 aa). His-312 serves as the catalytic Proton donor. 312 to 316 provides a ligand contact to 3',5'-cyclic GMP; sequence HNFRH. Positions 316, 352, and 353 each coordinate Zn(2+). Asp-353 contributes to the 3',5'-cyclic GMP binding site. Asp-353 contacts Mg(2+). Phosphoserine is present on Ser-379. 3',5'-cyclic GMP-binding positions include Asp-462, Tyr-484, and 512–513; that span reads AQ. Residue Asp-462 coordinates Zn(2+). Residues 564–593 are disordered; it reads QKKTDSLTSGATEKSRERSRDVKNSEGDCA. The span at 576–593 shows a compositional bias: basic and acidic residues; it reads EKSRERSRDVKNSEGDCA.

It belongs to the cyclic nucleotide phosphodiesterase family. PDE9 subfamily. Homodimer. Requires Zn(2+) as cofactor. It depends on Mg(2+) as a cofactor.

Its subcellular location is the cell projection. It is found in the ruffle membrane. The protein resides in the cytoplasm. The protein localises to the perinuclear region. It localises to the golgi apparatus. Its subcellular location is the endoplasmic reticulum. It is found in the cell membrane. The protein resides in the sarcolemma. The enzyme catalyses 3',5'-cyclic GMP + H2O = GMP + H(+). It functions in the pathway purine metabolism; 3',5'-cyclic GMP degradation; GMP from 3',5'-cyclic GMP: step 1/1. Specifically inhibited by a compound named 3r ((R)-2-((1-cyclopentyl-4-hydroxy-1H-pyrazolo[3,4-d]pyrimidin-6- yl)amino)-N-(4-methoxyphenyl)propanamide); the inhibitor forms a hydrogen bond with Tyr-484, Ala-512 and Gln-513. Its function is as follows. Specifically hydrolyzes the second messenger cGMP, which is a key regulator of many important physiological processes. Highly specific: compared to other members of the cyclic nucleotide phosphodiesterase family, has the highest affinity and selectivity for cGMP. Specifically regulates natriuretic-peptide-dependent cGMP signaling in heart, acting as a regulator of cardiac hypertrophy in myocytes and muscle. Does not regulate nitric oxide-dependent cGMP in heart. Additional experiments are required to confirm whether its ability to hydrolyze natriuretic-peptide-dependent cGMP is specific to heart or is a general feature of the protein. In brain, involved in cognitive function, such as learning and long-term memory. The sequence is that of High affinity cGMP-specific 3',5'-cyclic phosphodiesterase 9A (PDE9A) from Pan troglodytes (Chimpanzee).